Here is a 311-residue protein sequence, read N- to C-terminus: Forkhead box protein I2 (311 aa).

Residues Arg99–Arg193 constitute a DNA-binding region (fork-head). 2 disordered regions span residues Phe188–Cys237 and Phe263–Ala294. Positions Ser219–Ser231 are enriched in low complexity.

The protein localises to the nucleus. In terms of biological role, possible transcriptional activator. This is Forkhead box protein I2 from Mus musculus (Mouse).